Here is a 22-residue protein sequence, read N- to C-terminus: thr operon leader peptide (22 aa).

The disordered stretch occupies residues 1-22 (MRNISLTTTIITTTDTTGNGAG). Positions 7-22 (TTTIITTTDTTGNGAG) are enriched in low complexity.

It belongs to the thr operon leader peptide family.

In terms of biological role, this protein is involved in control of the biosynthesis of threonine. The protein is thr operon leader peptide of Serratia marcescens.